A 299-amino-acid polypeptide reads, in one-letter code: Coenzyme PQQ synthesis protein B (299 aa).

The protein belongs to the PqqB family.

It participates in cofactor biosynthesis; pyrroloquinoline quinone biosynthesis. Functionally, may be involved in the transport of PQQ or its precursor to the periplasm. The protein is Coenzyme PQQ synthesis protein B of Xanthomonas campestris pv. campestris (strain 8004).